The primary structure comprises 265 residues: Ribosomal RNA small subunit methyltransferase A (265 aa).

S-adenosyl-L-methionine-binding residues include H17, L19, G44, E65, D90, and N112.

The protein belongs to the class I-like SAM-binding methyltransferase superfamily. rRNA adenine N(6)-methyltransferase family. RsmA subfamily.

It localises to the cytoplasm. The catalysed reaction is adenosine(1518)/adenosine(1519) in 16S rRNA + 4 S-adenosyl-L-methionine = N(6)-dimethyladenosine(1518)/N(6)-dimethyladenosine(1519) in 16S rRNA + 4 S-adenosyl-L-homocysteine + 4 H(+). Its function is as follows. Specifically dimethylates two adjacent adenosines (A1518 and A1519) in the loop of a conserved hairpin near the 3'-end of 16S rRNA in the 30S particle. May play a critical role in biogenesis of 30S subunits. The chain is Ribosomal RNA small subunit methyltransferase A from Xylella fastidiosa (strain 9a5c).